We begin with the raw amino-acid sequence, 171 residues long: Myosin regulatory light polypeptide 9 (171 aa).

The span at 1 to 15 (MSSKRAKAKTTKKRP) shows a compositional bias: basic residues. The segment at 1 to 21 (MSSKRAKAKTTKKRPQSATSN) is disordered. An N-acetylserine modification is found at serine 2. A Phosphothreonine; by MLCK, CIT and ROCK2 modification is found at threonine 19. Position 20 is a phosphoserine; by CDC42BP, CIT, MLCK, PAK1, ROCK1, ROCK2, DAPK1, DAPK2 and ZIPK/DAPK3 (serine 20). 2 consecutive EF-hand domains span residues 29–64 (SQIQEFKEAFNMIDQNRDGFIDKEDLHDMLASLGKN) and 98–133 (DPEDVIRNAFACFDEEASGFIHEDHLRELLTTMGDR). The Ca(2+) site is built by aspartate 42, asparagine 44, aspartate 46, and aspartate 53.

Myosin is a hexamer of 2 heavy chains and 4 light chains: interacts with myosin heavy chain MYO19. Interacts with LUZP1; the interaction results in inhibition of phosphorylation of MYL9 by DAPK3. Phosphorylation increases the actin-activated myosin ATPase activity and thereby regulates the contractile activity. It is required to generate the driving force in the migration of the cells but not necessary for localization of myosin-2 at the leading edge. Phosphorylation is required for myotube formation. Phosphorylated by DAPK3; DAPK3-mediated phosphorylation is inhibited by LUZP1. Smooth muscle tissues and in some, but not all, nonmuscle cells.

It localises to the cytoplasm. The protein resides in the cytoskeleton. It is found in the cell cortex. Myosin regulatory subunit that plays an important role in regulation of both smooth muscle and nonmuscle cell contractile activity via its phosphorylation. Implicated in cytokinesis, receptor capping, and cell locomotion. In myoblasts, may regulate PIEZO1-dependent cortical actomyosin assembly involved in myotube formation. This is Myosin regulatory light polypeptide 9 (Myl9) from Rattus norvegicus (Rat).